Here is a 37-residue protein sequence, read N- to C-terminus: Large ribosomal subunit protein bL36 (37 aa).

This sequence belongs to the bacterial ribosomal protein bL36 family.

The polypeptide is Large ribosomal subunit protein bL36 (Marinomonas sp. (strain MWYL1)).